We begin with the raw amino-acid sequence, 147 residues long: Large ribosomal subunit protein uL13 (147 aa).

Belongs to the universal ribosomal protein uL13 family. Part of the 50S ribosomal subunit.

This protein is one of the early assembly proteins of the 50S ribosomal subunit, although it is not seen to bind rRNA by itself. It is important during the early stages of 50S assembly. This Pediococcus pentosaceus (strain ATCC 25745 / CCUG 21536 / LMG 10740 / 183-1w) protein is Large ribosomal subunit protein uL13.